The sequence spans 287 residues: ATP synthase gamma chain (287 aa).

Belongs to the ATPase gamma chain family. In terms of assembly, F-type ATPases have 2 components, CF(1) - the catalytic core - and CF(0) - the membrane proton channel. CF(1) has five subunits: alpha(3), beta(3), gamma(1), delta(1), epsilon(1). CF(0) has three main subunits: a, b and c.

The protein localises to the cell membrane. Its function is as follows. Produces ATP from ADP in the presence of a proton gradient across the membrane. The gamma chain is believed to be important in regulating ATPase activity and the flow of protons through the CF(0) complex. This chain is ATP synthase gamma chain, found in Geobacillus stearothermophilus (Bacillus stearothermophilus).